Here is a 294-residue protein sequence, read N- to C-terminus: UDP-3-O-acyl-N-acetylglucosamine deacetylase (294 aa).

3 residues coordinate Zn(2+): His75, His232, and Asp236. Residue His259 is the Proton donor of the active site.

Belongs to the LpxC family. It depends on Zn(2+) as a cofactor.

The catalysed reaction is a UDP-3-O-[(3R)-3-hydroxyacyl]-N-acetyl-alpha-D-glucosamine + H2O = a UDP-3-O-[(3R)-3-hydroxyacyl]-alpha-D-glucosamine + acetate. It participates in glycolipid biosynthesis; lipid IV(A) biosynthesis; lipid IV(A) from (3R)-3-hydroxytetradecanoyl-[acyl-carrier-protein] and UDP-N-acetyl-alpha-D-glucosamine: step 2/6. Catalyzes the hydrolysis of UDP-3-O-myristoyl-N-acetylglucosamine to form UDP-3-O-myristoylglucosamine and acetate, the committed step in lipid A biosynthesis. The chain is UDP-3-O-acyl-N-acetylglucosamine deacetylase from Campylobacter jejuni (strain RM1221).